A 240-amino-acid chain; its full sequence is uncharacterized protein (240 aa).

This is an uncharacterized protein from Acidianus two-tailed virus (ATV).